We begin with the raw amino-acid sequence, 367 residues long: 3-dehydroquinate synthase (367 aa).

Residues 99–103 (GVVGD), 123–124 (TT), K136, K145, and 163–166 (FLRT) contribute to the NAD(+) site. The Zn(2+) site is built by E178, H242, and H259.

It belongs to the sugar phosphate cyclases superfamily. Dehydroquinate synthase family. Co(2+) serves as cofactor. Zn(2+) is required as a cofactor. The cofactor is NAD(+).

Its subcellular location is the cytoplasm. It catalyses the reaction 7-phospho-2-dehydro-3-deoxy-D-arabino-heptonate = 3-dehydroquinate + phosphate. It functions in the pathway metabolic intermediate biosynthesis; chorismate biosynthesis; chorismate from D-erythrose 4-phosphate and phosphoenolpyruvate: step 2/7. Functionally, catalyzes the conversion of 3-deoxy-D-arabino-heptulosonate 7-phosphate (DAHP) to dehydroquinate (DHQ). The chain is 3-dehydroquinate synthase from Chlorobaculum parvum (strain DSM 263 / NCIMB 8327) (Chlorobium vibrioforme subsp. thiosulfatophilum).